Here is a 127-residue protein sequence, read N- to C-terminus: Histone H2A (127 aa).

Positions 1-20 are enriched in basic residues; the sequence is MSGRGKGGKAKTGGKAKSRS. The tract at residues 1–23 is disordered; that stretch reads MSGRGKGGKAKTGGKAKSRSSRA. Serine 2 is modified (N-acetylserine). At serine 2 the chain carries Phosphoserine. 3 positions are modified to N6-acetyllysine; partial: lysine 6, lysine 9, and lysine 11. Glutamine 106 carries the N5-methylglutamine modification. Residue lysine 121 forms a Glycyl lysine isopeptide (Lys-Gly) (interchain with G-Cter in ubiquitin) linkage.

Belongs to the histone H2A family. In terms of assembly, the nucleosome is a histone octamer containing two molecules each of H2A, H2B, H3 and H4 assembled in one H3-H4 heterotetramer and two H2A-H2B heterodimers. The octamer wraps approximately 147 bp of DNA. In terms of processing, monoubiquitination of Lys-121 gives a specific tag for epigenetic transcriptional repression. Phosphorylation on Ser-2 is enhanced during mitosis. Phosphorylation on Ser-2 directly represses transcription.

Its subcellular location is the nucleus. The protein localises to the chromosome. Core component of nucleosome. Nucleosomes wrap and compact DNA into chromatin, limiting DNA accessibility to the cellular machineries which require DNA as a template. Histones thereby play a central role in transcription regulation, DNA repair, DNA replication and chromosomal stability. DNA accessibility is regulated via a complex set of post-translational modifications of histones, also called histone code, and nucleosome remodeling. This is Histone H2A (his-3) from Caenorhabditis elegans.